The following is a 382-amino-acid chain: Sulfate adenylyltransferase (382 aa).

It belongs to the sulfate adenylyltransferase family.

It carries out the reaction sulfate + ATP + H(+) = adenosine 5'-phosphosulfate + diphosphate. The protein operates within sulfur metabolism; hydrogen sulfide biosynthesis; sulfite from sulfate: step 1/3. The chain is Sulfate adenylyltransferase from Staphylothermus marinus (strain ATCC 43588 / DSM 3639 / JCM 9404 / F1).